The chain runs to 384 residues: uncharacterized protein (384 aa).

10 helical membrane passes run 11-31 (LWFI…GISI), 33-53 (WMIG…AWLM), 66-86 (LALG…LSVL), 94-114 (FSVG…GYVL), 153-173 (LVQM…VILI), 197-217 (LAPV…CKAA), 224-244 (APWL…GAAV), 284-304 (IIIV…LSAV), 309-329 (LTGI…IAEM), and 342-362 (FVVA…PPFY).

It belongs to the AbrB family.

It is found in the cell membrane. This is an uncharacterized protein from Bacillus subtilis (strain 168).